Here is a 393-residue protein sequence, read N- to C-terminus: MNVPATRKDLMIVNMGPHHPSMHGVLRLIVTLDGEDVIDCEPVLGYLHRGMEKIAENRTIIQYLPYVTRWDYLATMFTEAITVNAPEQLGNIQVPKRASYIRVIMLELSRIASHLLWLGPFMADIGAQTPFFYIFRERELLYDLFEAATGMRMMHNYFRIGGVAADLPHGWIDKCLDFCDYFLTGVVEYQKLITRNPIFLERVEGVGIIGGEEAINWGLSGPMLRASGIQWDLRKVDHYECYDEFDWQVQWQKEGDSLARYLVRISEMTESIKILQQALEGIPGGPYENLEGRRFDRESDSEWNDFDYRFISKKPSPTFELSKQELYVRVEAPKGELGIFLIGDNSVFPWRWKIRPPGFINLQILPHLVKRMKLADIMTILGSIDIIMGEVDR.

The protein belongs to the complex I 49 kDa subunit family. As to quaternary structure, NDH is composed of at least 16 different subunits, 5 of which are encoded in the nucleus.

The protein resides in the plastid. It is found in the chloroplast thylakoid membrane. It carries out the reaction a plastoquinone + NADH + (n+1) H(+)(in) = a plastoquinol + NAD(+) + n H(+)(out). The catalysed reaction is a plastoquinone + NADPH + (n+1) H(+)(in) = a plastoquinol + NADP(+) + n H(+)(out). Its function is as follows. NDH shuttles electrons from NAD(P)H:plastoquinone, via FMN and iron-sulfur (Fe-S) centers, to quinones in the photosynthetic chain and possibly in a chloroplast respiratory chain. The immediate electron acceptor for the enzyme in this species is believed to be plastoquinone. Couples the redox reaction to proton translocation, and thus conserves the redox energy in a proton gradient. The protein is NAD(P)H-quinone oxidoreductase subunit H, chloroplastic of Calycanthus floridus var. glaucus (Eastern sweetshrub).